Here is a 65-residue protein sequence, read N- to C-terminus: MSLQVPVAKEDNRESNSHLATLSGNLYTRMNLPHEPRARAGIVFFMEKQSNLALHSEFLLHVIIN.

Its subcellular location is the plastid. It is found in the chloroplast. This is an uncharacterized protein from Mesostigma viride (Green alga).